The primary structure comprises 182 residues: UPF0149 protein HI_0817 (182 aa).

The protein belongs to the UPF0149 family.

This chain is UPF0149 protein HI_0817, found in Haemophilus influenzae (strain ATCC 51907 / DSM 11121 / KW20 / Rd).